A 1059-amino-acid polypeptide reads, in one-letter code: Potassium transporter TRK1 (1059 aa).

Residues 1–46 (MLYRVSGFYKRHTRNFTNIDYGYYIRNFIHHIASKIYPYAKVVLPN) are Cytoplasmic-facing. Residues 47 to 67 (FRAAHYFYILTLVILGSILVY) traverse the membrane as a helical segment. Topologically, residues 68–73 (PVKTCA) are extracellular. An intramembrane segment occupies 74–90 (YIDVLFFTAGASTQAGL). Topologically, residues 91–99 (NTVNVNDLS) are extracellular. A helical transmembrane segment spans residues 100-122 (LYQQIVLYLLATLATPIFIHGSL). The Cytoplasmic segment spans residues 123–625 (LFVRLYYFER…LGGIEYRAVK (503 aa)). Disordered stretches follow at residues 180–276 (REAE…IDPE), 304–350 (IGSP…EDED), and 404–574 (PWTS…SIEN). The segment covering 186 to 203 (SSSSPQSSSSQTSQPVST) has biased composition (low complexity). The span at 236–245 (EKIHFEEPQR) shows a compositional bias: basic and acidic residues. Over residues 335 to 344 (PATNSVGTGN) the composition is skewed to polar residues. Over residues 412–423 (TLSNSSKKGSLS) the composition is skewed to low complexity. 2 stretches are compositionally biased toward acidic residues: residues 428 to 449 (DTEDDSEDEEYASIDSETSDIS) and 469 to 490 (YEEDEDEDEHNSDDDDDDDDGE). The segment covering 524-536 (RSNTLDTPQQNTS) has biased composition (polar residues). Basic residues predominate over residues 540 to 552 (KIRKKAPKRKTPR). Residues 556–566 (NASFNQHSNVS) show a composition bias toward polar residues. A helical membrane pass occupies residues 626 to 649 (LLIKIIVVYYVGFNIIPGVMLSIW). At 650–668 (IYCMPHYKNLMISSSISPA) the chain is on the extracellular side. The stretch at 669–685 (WWAFFTSQSSFNDLGLT) is an intramembrane region. Topologically, residues 686-696 (LTSNSMMSFNQ) are extracellular. The chain crosses the membrane as a helical span at residues 697 to 713 (NAFVQILCSFLIVIGNT). Residues 714-757 (GFPILLRFIIWVMFKTARPLSLYKESLGFLLDHPRRCFTLLFPS) lie on the Cytoplasmic side of the membrane. The helical transmembrane segment at 758–781 (VPTWWLFFILVVLNGFDLVIFCIL) threads the bilayer. Residues 782–796 (DLHDDTFKGVDMGYR) are Extracellular-facing. The stretch at 797-813 (VLNGLFQAFCTRTVGFS) is an intramembrane region. Residues 814-820 (VMDLSQL) lie on the Extracellular side of the membrane. The chain crosses the membrane as a helical span at residues 821–844 (HAATQVSYLIMMYISVLPIAISVR). Topologically, residues 845–877 (RTNVYEEQSLGVYAKENAEGVDESAPSNYVGSH) are cytoplasmic. Residues 878 to 899 (LRNQLSYDLWYICLGLFIICIA) traverse the membrane as a helical segment. The Extracellular portion of the chain corresponds to 900–912 (EGKRLKEQDLRFS). The stretch at 913-931 (IFAVLFEIVSAYGTVGMSM) is an intramembrane region. Residues 932–945 (GYPGVDCSLSGEFN) lie on the Extracellular side of the membrane. A helical transmembrane segment spans residues 946-968 (VISKLVIIAMMIRGRHRGLPYTI). The Cytoplasmic segment spans residues 969 to 1059 (DRAIMLPNAA…RYVVRTVSEV (91 aa)).

It belongs to the TrkH potassium transport family.

Its subcellular location is the cell membrane. The enzyme catalyses K(+)(in) = K(+)(out). It carries out the reaction chloride(in) = chloride(out). Its activity is regulated as follows. TRK1-mediated chloride conductance is blocked by 4,4'-diisothiocyanatostilbene-2,2'-disulfonic acid. In terms of biological role, potassium transporter that mediates K(+) influx, as well as Cl(-) efflux as a secondary function. TRK1 is the major K(+) uptake transporter that regulates membrane potential and intracellular pH. The TRK1-mediated Cl(-) efflux should serve as a Cl(-) detoxification route and may play a role in sustaining C.albicans on mammalian epithelial surfaces, or in physiological saline solutions such as saliva. Mediates candidacidal activities of cysteine-free peptides, but not of defensins. The hallmark of salivary gland-secreted histatin-5 (Hst 5) killing of C.albicans is the rapid efflux of cellular ATP and other small nucleotides and ions from the cell as well as concurrent intracellular uptake of propidium iodide (PI). TRK1 is the channel for Hst 5-induced killing and histatin-5 may directly or indirectly alter TRK1 function, allowing the efflux of larger anions, including ATP, and the influx of small cationic dyes, such as PI. The polypeptide is Potassium transporter TRK1 (Candida albicans (Yeast)).